A 315-amino-acid chain; its full sequence is 4-hydroxy-3-methylbut-2-enyl diphosphate reductase (315 aa).

Cys-12 is a [4Fe-4S] cluster binding site. Residues His-41 and His-74 each coordinate (2E)-4-hydroxy-3-methylbut-2-enyl diphosphate. The dimethylallyl diphosphate site is built by His-41 and His-74. Isopentenyl diphosphate contacts are provided by His-41 and His-74. Cys-96 contributes to the [4Fe-4S] cluster binding site. His-124 contacts (2E)-4-hydroxy-3-methylbut-2-enyl diphosphate. His-124 serves as a coordination point for dimethylallyl diphosphate. An isopentenyl diphosphate-binding site is contributed by His-124. The active-site Proton donor is Glu-126. Thr-167 contributes to the (2E)-4-hydroxy-3-methylbut-2-enyl diphosphate binding site. A [4Fe-4S] cluster-binding site is contributed by Cys-197. The (2E)-4-hydroxy-3-methylbut-2-enyl diphosphate site is built by Ser-225, Ser-226, Asn-227, and Ser-269. The dimethylallyl diphosphate site is built by Ser-225, Ser-226, Asn-227, and Ser-269. Ser-225, Ser-226, Asn-227, and Ser-269 together coordinate isopentenyl diphosphate.

It belongs to the IspH family. In terms of assembly, homodimer. [4Fe-4S] cluster serves as cofactor.

It carries out the reaction isopentenyl diphosphate + 2 oxidized [2Fe-2S]-[ferredoxin] + H2O = (2E)-4-hydroxy-3-methylbut-2-enyl diphosphate + 2 reduced [2Fe-2S]-[ferredoxin] + 2 H(+). The enzyme catalyses dimethylallyl diphosphate + 2 oxidized [2Fe-2S]-[ferredoxin] + H2O = (2E)-4-hydroxy-3-methylbut-2-enyl diphosphate + 2 reduced [2Fe-2S]-[ferredoxin] + 2 H(+). The protein operates within isoprenoid biosynthesis; dimethylallyl diphosphate biosynthesis; dimethylallyl diphosphate from (2E)-4-hydroxy-3-methylbutenyl diphosphate: step 1/1. Its pathway is isoprenoid biosynthesis; isopentenyl diphosphate biosynthesis via DXP pathway; isopentenyl diphosphate from 1-deoxy-D-xylulose 5-phosphate: step 6/6. Functionally, catalyzes the conversion of 1-hydroxy-2-methyl-2-(E)-butenyl 4-diphosphate (HMBPP) into a mixture of isopentenyl diphosphate (IPP) and dimethylallyl diphosphate (DMAPP). Acts in the terminal step of the DOXP/MEP pathway for isoprenoid precursor biosynthesis. The polypeptide is 4-hydroxy-3-methylbut-2-enyl diphosphate reductase (Wigglesworthia glossinidia brevipalpis).